Reading from the N-terminus, the 60-residue chain is Large ribosomal subunit protein bL32 (60 aa).

The protein belongs to the bacterial ribosomal protein bL32 family.

The chain is Large ribosomal subunit protein bL32 from Petrotoga mobilis (strain DSM 10674 / SJ95).